The primary structure comprises 65 residues: MALPRNVIPMPRSRFLRVKCIDCGNEQIVFSHPATRVRCNVCGATLVEPTGGKGIIRAKILEVLE.

Zn(2+) contacts are provided by cysteine 20, cysteine 23, cysteine 39, and cysteine 42. The C4-type zinc finger occupies 20 to 42; it reads CIDCGNEQIVFSHPATRVRCNVC.

It belongs to the eukaryotic ribosomal protein eS27 family. As to quaternary structure, part of the 30S ribosomal subunit. Zn(2+) is required as a cofactor.

The protein is Small ribosomal subunit protein eS27 of Pyrococcus abyssi (strain GE5 / Orsay).